Consider the following 243-residue polypeptide: PF03932 family protein CutC (243 aa).

Belongs to the CutC family.

The protein resides in the cytoplasm. This is PF03932 family protein CutC from Histophilus somni (strain 2336) (Haemophilus somnus).